A 792-amino-acid chain; its full sequence is X-ray radiation resistance-associated protein 1 (792 aa).

6 LRR repeats span residues 104 to 125 (DLCTINAKENDFKHFHSVIYIN), 141 to 155 (ALKELDLAFNGIKTI), 164 to 184 (LLEFLDLSFNSLTVEAICDLG), 188 to 209 (HLRVLLLTGNGLTSLPPNLAVA), 229 to 250 (ALETLMLDDNRLSNPSCFASLA), and 254 to 275 (RLKKLSLDENRIIRIPYLQQVQ). 3 disordered regions span residues 490-517 (AEDLPTTKSTSVESEMPTENLEGHSPSC), 537-562 (TLSHLSDTTVRLSPERPSDEDSKSTE), and 577-601 (IHKDDLELKEKDQKKPPTAPREVKG). Basic and acidic residues predominate over residues 549–560 (SPERPSDEDSKS). Residues 723-745 (HKQYLEAKRLLKEFQARYRQLVS) are a coiled coil.

In terms of tissue distribution, expressed predominantly in testis followed by prostate and ovary. Low levels found in other tissues including peripheral blood leukocytes, spleen, thymus, small intestine and colon. Also expressed in neuroblastoma, glioma, breast, lung, leukemia, renal, ovarian, prostate and colorectal cancer cell lines.

It is found in the cytoplasm. It localises to the nucleus. In terms of biological role, may be involved in the response of cells to X-ray radiation. This Homo sapiens (Human) protein is X-ray radiation resistance-associated protein 1.